The primary structure comprises 676 residues: UvrABC system protein C (676 aa).

The GIY-YIG domain occupies Val-16–Ile-95. Residues Asp-208–Ala-243 enclose the UVR domain.

Belongs to the UvrC family. Interacts with UvrB in an incision complex.

The protein localises to the cytoplasm. Functionally, the UvrABC repair system catalyzes the recognition and processing of DNA lesions. UvrC both incises the 5' and 3' sides of the lesion. The N-terminal half is responsible for the 3' incision and the C-terminal half is responsible for the 5' incision. In Mycobacterium sp. (strain JLS), this protein is UvrABC system protein C.